The chain runs to 539 residues: MSFKSIFLTGGVVSSLGKGLTAASLALLLERQDLKVAMLKLDPYLNVDPGTMNPYEHGEVYVTDDGVETDLDLGHYHRFSSVQLSKYSIATSGQIYTKVLTKERNGEFLGSTVQVIPHVTNEIINVIQSCADHHKPDILIVEIGGTIGDIESLPFLEAVRQFRCEHPQDCLSIHMTYVPYLRAAKEIKTKPTQHSVQNLRSIGISPDVILCRSEAPLSTEVKRKISLFCNVPEHAVFNAIDLERSIYEMPLLLAKENISDFLLNKLGFSPKPLDLSDWQDLVEALCDKERQHVRIGLVGKYLEHKDAYKSVFEALFHASVPANCSLELVPIAPESEDLLEQLSQCDGCLIPGGFGTRSWEGKISAARYCREQNIPCFGICLGMQALVVEYARNVLDKPLANSMEMNPETPDPVVCMMEGQDSVVKGGTMRLGAYPCRIAPGSLASAAYKTDLVQERHRHRYEVNPSYIERLEEHGLKIAGVCPLGELCEIVEIPNHRWMLGVQFHPEFLSKLAKPHPLFIEFIRAAKAYSLEKANHEHR.

Residues 1–268 form an amidoligase domain region; that stretch reads MSFKSIFLTG…SDFLLNKLGF (268 aa). S14 lines the CTP pocket. Residue S14 participates in UTP binding. Residue 15–20 participates in ATP binding; that stretch reads SLGKGL. Y55 is an L-glutamine binding site. D72 lines the ATP pocket. Residues D72 and E142 each coordinate Mg(2+). CTP-binding positions include 149-151, 188-193, and K224; these read DIE and KTKPTQ. UTP is bound by residues 188 to 193 and K224; that span reads KTKPTQ. In terms of domain architecture, Glutamine amidotransferase type-1 spans 294–532; that stretch reads RIGLVGKYLE…IRAAKAYSLE (239 aa). Position 353 (G353) interacts with L-glutamine. C380 acts as the Nucleophile; for glutamine hydrolysis in catalysis. Residues 381–384, E404, and R460 contribute to the L-glutamine site; that span reads LGMQ. Catalysis depends on residues H505 and E507.

This sequence belongs to the CTP synthase family. Homotetramer.

The enzyme catalyses UTP + L-glutamine + ATP + H2O = CTP + L-glutamate + ADP + phosphate + 2 H(+). It carries out the reaction L-glutamine + H2O = L-glutamate + NH4(+). The catalysed reaction is UTP + NH4(+) + ATP = CTP + ADP + phosphate + 2 H(+). It functions in the pathway pyrimidine metabolism; CTP biosynthesis via de novo pathway; CTP from UDP: step 2/2. With respect to regulation, allosterically activated by GTP, when glutamine is the substrate; GTP has no effect on the reaction when ammonia is the substrate. The allosteric effector GTP functions by stabilizing the protein conformation that binds the tetrahedral intermediate(s) formed during glutamine hydrolysis. Inhibited by the product CTP, via allosteric rather than competitive inhibition. Catalyzes the ATP-dependent amination of UTP to CTP with either L-glutamine or ammonia as the source of nitrogen. Regulates intracellular CTP levels through interactions with the four ribonucleotide triphosphates. This chain is CTP synthase, found in Chlamydia trachomatis serovar L2 (strain ATCC VR-902B / DSM 19102 / 434/Bu).